The following is a 297-amino-acid chain: 4-hydroxybenzoate octaprenyltransferase (297 aa).

Helical transmembrane passes span isoleucine 29 to valine 49, leucine 55 to phenylalanine 75, alanine 102 to alanine 122, threonine 124 to methionine 141, phenylalanine 146 to alanine 166, glycine 169 to tyrosine 189, valine 219 to phenylalanine 239, leucine 241 to tryptophan 261, and valine 270 to valine 290.

The protein belongs to the UbiA prenyltransferase family. Mg(2+) is required as a cofactor.

Its subcellular location is the cell inner membrane. It carries out the reaction all-trans-octaprenyl diphosphate + 4-hydroxybenzoate = 4-hydroxy-3-(all-trans-octaprenyl)benzoate + diphosphate. It participates in cofactor biosynthesis; ubiquinone biosynthesis. Its function is as follows. Catalyzes the prenylation of para-hydroxybenzoate (PHB) with an all-trans polyprenyl group. Mediates the second step in the final reaction sequence of ubiquinone-8 (UQ-8) biosynthesis, which is the condensation of the polyisoprenoid side chain with PHB, generating the first membrane-bound Q intermediate 3-octaprenyl-4-hydroxybenzoate. This is 4-hydroxybenzoate octaprenyltransferase from Stutzerimonas stutzeri (strain A1501) (Pseudomonas stutzeri).